Reading from the N-terminus, the 894-residue chain is Microsomal triglyceride transfer protein large subunit (894 aa).

A signal peptide spans 1-21 (MILLAVLFLCFFSSYSASVKG). In terms of domain architecture, Vitellogenin spans 28 to 658 (LNNERLYKLT…IFQYIGKAEL (631 aa)). A disulfide bridge connects residues Cys174 and Cys194.

In terms of assembly, interacts with PRAP1. As to quaternary structure, heterodimer; heterodimerizes with the protein disulfide isomerase (P4HB/PDI). Interacts with APOB. Heterodimer; heterodimerizes with the protein disulfide isomerase (P4HB/PDI). Post-translationally, cleaved by signal peptidase between residues Gln-33 and Asn-34. As to expression, mainly expressed in the intestine and the liver, and at lower levels in white and brown fat cells. Expressed in heart. In terms of tissue distribution, ubiquitous, and is the major isoform in hematopoietic cells and adipocytes.

It localises to the endoplasmic reticulum. The protein localises to the golgi apparatus. It carries out the reaction a 1,2-diacyl-sn-glycero-3-phosphocholine(in) = a 1,2-diacyl-sn-glycero-3-phosphocholine(out). The enzyme catalyses a 1,2-diacyl-sn-glycero-3-phosphoethanolamine(in) = a 1,2-diacyl-sn-glycero-3-phosphoethanolamine(out). The catalysed reaction is a cholesterol ester(in) = a cholesterol ester(out). It catalyses the reaction a triacyl-sn-glycerol(in) = a triacyl-sn-glycerol(out). Its function is as follows. Catalyzes the transport of triglyceride, cholesteryl ester, and phospholipid between phospholipid surfaces. Required for the assembly and secretion of plasma lipoproteins that contain apolipoprotein B. May be involved in regulating cholesteryl ester biosynthesis in cells that produce lipoproteins. In terms of biological role, critical for the development of natural killer T (NKT) cells. Required for the assembly and secretion of plasma lipoproteins that contain apolipoprotein B. The polypeptide is Microsomal triglyceride transfer protein large subunit (Mttp) (Mus musculus (Mouse)).